Here is a 282-residue protein sequence, read N- to C-terminus: Homeobox-leucine zipper protein HAT1 (282 aa).

Residues L71–R134 are disordered. Over residues G76–S89 the composition is skewed to low complexity. The segment at residues T132 to Q191 is a DNA-binding region (homeobox). A leucine-zipper region spans residues L199–L220.

This sequence belongs to the HD-ZIP homeobox family. Class II subfamily. Interacts with BZIP30.

The protein localises to the nucleus. In terms of biological role, probable transcription factor. This Arabidopsis thaliana (Mouse-ear cress) protein is Homeobox-leucine zipper protein HAT1 (HAT1).